The chain runs to 158 residues: Cytosine deaminase (158 aa).

A CMP/dCMP-type deaminase domain is found at 9-129 (KWDQKGMDIA…KYLQTRGHEV (121 aa)). Asparagine 51 contacts substrate. Histidine 62 is a binding site for Zn(2+). Residue glutamate 64 is the Proton donor of the active site. Positions 91 and 94 each coordinate Zn(2+). Aspartate 155 provides a ligand contact to substrate.

The protein belongs to the cytidine and deoxycytidylate deaminase family. Homodimer. Zn(2+) is required as a cofactor.

Its subcellular location is the cytoplasm. It localises to the nucleus. It catalyses the reaction cytosine + H2O + H(+) = uracil + NH4(+). It participates in pyrimidine metabolism; UMP biosynthesis via salvage pathway; uracil from cytosine: step 1/1. Its function is as follows. Catalyzes the hydrolytic deamination of cytosine to uracil or 5-methylcytosine to thymine. Is involved in the pyrimidine salvage pathway, which allows the cell to utilize cytosine for pyrimidine nucleotide synthesis. This is Cytosine deaminase from Saccharomyces cerevisiae (strain ATCC 204508 / S288c) (Baker's yeast).